Reading from the N-terminus, the 326-residue chain is Malate dehydrogenase (326 aa).

12–18 is a binding site for NAD(+); it reads GGTGQIA. The substrate site is built by arginine 93 and arginine 99. Residues asparagine 106, glutamine 113, and 130–132 contribute to the NAD(+) site; that span reads VGN. 2 residues coordinate substrate: asparagine 132 and arginine 163. Histidine 188 (proton acceptor) is an active-site residue.

It belongs to the LDH/MDH superfamily. MDH type 2 family.

It carries out the reaction (S)-malate + NAD(+) = oxaloacetate + NADH + H(+). Functionally, catalyzes the reversible oxidation of malate to oxaloacetate. The polypeptide is Malate dehydrogenase (Chlamydia muridarum (strain MoPn / Nigg)).